A 109-amino-acid chain; its full sequence is Cell division protein ZapA (109 aa).

A coiled-coil region spans residues 21–99; that stretch reads PDQRDALNQA…IEQALLEQGR (79 aa).

Belongs to the ZapA family. Type 1 subfamily. Homodimer. Interacts with FtsZ.

The protein resides in the cytoplasm. In terms of biological role, activator of cell division through the inhibition of FtsZ GTPase activity, therefore promoting FtsZ assembly into bundles of protofilaments necessary for the formation of the division Z ring. It is recruited early at mid-cell but it is not essential for cell division. The protein is Cell division protein ZapA of Shigella boydii serotype 18 (strain CDC 3083-94 / BS512).